A 322-amino-acid chain; its full sequence is MISRHLQNNLMSVDPVSSQAMELSDVTLIEGVGNEVTVVAGVVVLILALVLAWLSTYVADSGSNPLLGTIVSAGDTSVLHLGHVDHLVAGQGTPEPTELPHPSEGNDEKAEEAGEGGGDPTGEPGAGGGVEPSLEHLLDIQGLPKRQAGPGNSSLEAPVRSEDSTCLPSSPSLISVRLKFFNDTEELAVARPEDTVGALKSKYFPGQESQMKLIYQGRLLQDPARTLRSLNITDNCVIHCHRSPPGSAVAGPSSSLAPSSTTEPPNLGVSVGSLMVPVFVVLLGVVWYFRINYRQFFTAPATVSLVGVTVFFSFLVFGMYGR.

Residues 38-58 traverse the membrane as a helical segment; it reads VVAGVVVLILALVLAWLSTYV. Residues 88–168 form a disordered region; the sequence is VAGQGTPEPT…VRSEDSTCLP (81 aa). A compositionally biased stretch (gly residues) spans 115–130; sequence EGGGDPTGEPGAGGGV. Residues 174 to 247 form the Ubiquitin-like domain; the sequence is ISVRLKFFND…IHCHRSPPGS (74 aa). Transmembrane regions (helical) follow at residues 267–287 and 296–316; these read LGVS…GVVW and FFTA…SFLV.

The protein resides in the membrane. The polypeptide is Transmembrane and ubiquitin-like domain-containing protein 2 (TMUB2) (Bos taurus (Bovine)).